A 212-amino-acid polypeptide reads, in one-letter code: MVPSDRDRVLAEAGVSRETAAALDLYVAQLTRWQAIKNLVGPATLPDVWTRHIADSLQLLDAAPQARTWLDLGSGAGIPGLILAIAGVRNRPDLRVDLVESNARKGAFLQETARLTGAPARIHVARIERVVAGFRGVDVVCARALAPLPQLIAWTAPLLKSGTIGLFPKGREAQSELTAAREKWTFVADVIPSRTDSSAGIVRISSLSDPLP.

S-adenosyl-L-methionine-binding positions include G73, I127–E128, and R143.

Belongs to the methyltransferase superfamily. RNA methyltransferase RsmG family.

It localises to the cytoplasm. It catalyses the reaction guanosine(527) in 16S rRNA + S-adenosyl-L-methionine = N(7)-methylguanosine(527) in 16S rRNA + S-adenosyl-L-homocysteine. Specifically methylates the N7 position of guanine in position 527 of 16S rRNA. The polypeptide is Ribosomal RNA small subunit methyltransferase G (Methylobacterium sp. (strain 4-46)).